The chain runs to 357 residues: Elongation factor Ts (357 aa).

Positions 82–85 (TDFV) are involved in Mg(2+) ion dislocation from EF-Tu.

Belongs to the EF-Ts family.

The protein localises to the cytoplasm. Functionally, associates with the EF-Tu.GDP complex and induces the exchange of GDP to GTP. It remains bound to the aminoacyl-tRNA.EF-Tu.GTP complex up to the GTP hydrolysis stage on the ribosome. In Campylobacter jejuni subsp. jejuni serotype O:6 (strain 81116 / NCTC 11828), this protein is Elongation factor Ts.